The primary structure comprises 222 residues: MIF4G domain-containing protein (222 aa).

The region spanning 3–205 (EPSKEEYKIQ…LEIIEFRAAG (203 aa)) is the MIF4G domain.

Belongs to the MIF4GD family. Interacts with EIF4G1, EIF4G2 and SLBP; probably tethered by SLBP to the 3'-end of mRNAs ending with the histone stem-loop, it also interacts with EIF4G1 which is bound to their 5'-end.

The protein localises to the cytoplasm. Its subcellular location is the nucleus. Functionally, functions in replication-dependent translation of histone mRNAs which differ from other eukaryotic mRNAs in that they do not end with a poly-A tail but a stem-loop. May participate in circularizing those mRNAs specifically enhancing their translation. This chain is MIF4G domain-containing protein (MIF4GD), found in Bos taurus (Bovine).